The primary structure comprises 172 residues: Type IV secretion system putative outer membrane lipoprotein BAB2_0057 (172 aa).

Positions 1–15 are cleaved as a signal peptide; it reads MRTLVMVACAVSLAA. A lipid anchor (N-palmitoyl cysteine) is attached at C16. C16 carries the S-diacylglycerol cysteine lipid modification. One can recognise an OmpA-like domain in the interval 58-172; it reads WPARPPKQTV…RRVDIEILRK (115 aa).

It is found in the cell outer membrane. In terms of biological role, the virB operon is essential for intracellular survival and is not involved in the invasion process. Constitutes a major determinant of virulence in mice. This protein is essential for pathogenesis in mice but is not required for intracellular survival. The sequence is that of Type IV secretion system putative outer membrane lipoprotein BAB2_0057 from Brucella abortus (strain 2308).